A 468-amino-acid chain; its full sequence is MSSGKIAQVVGPVVDVMFASGDKLPEINNALIVYKDSDKKQKIVLEVALELGDGMVRTIAMESTDGLTRGLEVLDTGRAISVPVGKETLGRVFNVLGETIDLEEPFAEDVDRQPIHKKAPSFDELSTSSEILETGIKVIDLLAPYLKGGKVGLFGGAGVGKTVLIQELIHNIAQEHGGISVFTGVGERTREGNDLYWEMKESGVIEKTAMVFGQMNEPPGARMRVALTGLTIAEYFRDVEGQDVLLFIDNIFRFTQAGSEVSALLGRMPSAVGYQPTLATEMGQLQERITSTQKGSVTSIQAIYVPADDYTDPAPATAFAHLDSTTNLERKLTQMGIYPAVDPLASSSRALSPEIVGEEHYAVATEVQRVLQRYRELQDIIAILGMDELSDEEKTLVGRARRIQFFLSQNFNVAEQFTGLPGSYVPVADTVRGFKEILEGKYDDLPEDAFRSVGPIEDVIKKAEKMGF.

Residue 155–162 (GGAGVGKT) coordinates ATP.

It belongs to the ATPase alpha/beta chains family. In terms of assembly, F-type ATPases have 2 components, CF(1) - the catalytic core - and CF(0) - the membrane proton channel. CF(1) has five subunits: alpha(3), beta(3), gamma(1), delta(1), epsilon(1). CF(0) has three main subunits: a(1), b(2) and c(9-12). The alpha and beta chains form an alternating ring which encloses part of the gamma chain. CF(1) is attached to CF(0) by a central stalk formed by the gamma and epsilon chains, while a peripheral stalk is formed by the delta and b chains.

The protein localises to the cell membrane. The enzyme catalyses ATP + H2O + 4 H(+)(in) = ADP + phosphate + 5 H(+)(out). Functionally, produces ATP from ADP in the presence of a proton gradient across the membrane. The catalytic sites are hosted primarily by the beta subunits. This Streptococcus pyogenes serotype M5 (strain Manfredo) protein is ATP synthase subunit beta.